Reading from the N-terminus, the 124-residue chain is Transmembrane protein 141 (124 aa).

2 consecutive transmembrane segments (helical) span residues 29–48 (YAFM…IFFG) and 60–78 (LQWN…SYSV). Positions 97-124 (NIPDRNSDKEEPETSADSTTTQHEDVLE) are disordered.

Belongs to the TMEM141 family.

It localises to the membrane. The polypeptide is Transmembrane protein 141 (tmem141) (Danio rerio (Zebrafish)).